The chain runs to 506 residues: Protein EFFECTOR OF TRANSCRIPTION 1 (506 aa).

Residues 185 to 225 (AFQGLYELSHDHGRKDDVLVANLGQPESIRSRLRSYSRSFA) enclose the GIY-YIG domain. Polar residues predominate over residues 234–247 (LSQTILPTTQNKSD). Positions 234 to 298 (LSQTILPTTQ…VSEKHDDIVD (65 aa)) are disordered. A compositionally biased stretch (basic and acidic residues) spans 248–272 (NQTEEKKSDSEEEREVSSDAAEKES). A compositionally biased stretch (low complexity) spans 273–288 (NSLPSILRLSRSRPQP). Cx9Cx9RCx2HK repeat units follow at residues 306 to 331 (CGVL…TEHK) and 361 to 386 (CGVI…EDHK). Basic and acidic residues predominate over residues 404 to 413 (KAVNEDKSKP). Positions 404–426 (KAVNEDKSKPETSTGMNQEGSGL) are disordered. The span at 414 to 423 (ETSTGMNQEG) shows a compositional bias: polar residues. 2 Cx9Cx9RCx2HK repeats span residues 428–453 (CEAT…WQHK) and 475–500 (CGFK…EEHK).

As to expression, expressed in rosette leaves, stipules, stems, flowers, siliques and mature seeds. Expressed in the vascular bundles of xylem in shoot parenchyma cells. Expressed in the remnant cytoplasm of differentiated fiber cells and in protoxylem element of parenchymal cells.

It is found in the cytoplasm. It localises to the nucleus. Transcriptional regulator involved in the regulation of cell differentiation in meristems. Binds DNA without sequence preference. The chain is Protein EFFECTOR OF TRANSCRIPTION 1 from Arabidopsis thaliana (Mouse-ear cress).